The chain runs to 339 residues: Ribosomal RNA large subunit methyltransferase F (339 aa).

Residues 1–26 form a disordered region; that stretch reads MTAPSTPKPQRKKPKTATTAKPVVPR.

The protein belongs to the methyltransferase superfamily. METTL16/RlmF family.

The protein resides in the cytoplasm. It catalyses the reaction adenosine(1618) in 23S rRNA + S-adenosyl-L-methionine = N(6)-methyladenosine(1618) in 23S rRNA + S-adenosyl-L-homocysteine + H(+). Its function is as follows. Specifically methylates the adenine in position 1618 of 23S rRNA. In Pseudomonas fluorescens (strain SBW25), this protein is Ribosomal RNA large subunit methyltransferase F.